We begin with the raw amino-acid sequence, 526 residues long: Histidine ammonia-lyase (526 aa).

Positions 143–145 form a cross-link, 5-imidazolinone (Ala-Gly); it reads ASG. Residue Ser-144 is modified to 2,3-didehydroalanine (Ser).

This sequence belongs to the PAL/histidase family. In terms of processing, contains an active site 4-methylidene-imidazol-5-one (MIO), which is formed autocatalytically by cyclization and dehydration of residues Ala-Ser-Gly.

It is found in the cytoplasm. It catalyses the reaction L-histidine = trans-urocanate + NH4(+). Its pathway is amino-acid degradation; L-histidine degradation into L-glutamate; N-formimidoyl-L-glutamate from L-histidine: step 1/3. This is Histidine ammonia-lyase from Aromatoleum aromaticum (strain DSM 19018 / LMG 30748 / EbN1) (Azoarcus sp. (strain EbN1)).